Reading from the N-terminus, the 335-residue chain is tRNA N6-adenosine threonylcarbamoyltransferase (335 aa).

The Fe cation site is built by H111, H115, and Y132. Residues 132-136 (YVSGG), D164, G177, E181, and N260 each bind substrate. D288 contributes to the Fe cation binding site.

This sequence belongs to the KAE1 / TsaD family. As to quaternary structure, monomer. Component of the KEOPS complex that consists of Kae1, Bud32, Cgi121 and Pcc1; the whole complex dimerizes. Fe(2+) is required as a cofactor.

It localises to the cytoplasm. It catalyses the reaction L-threonylcarbamoyladenylate + adenosine(37) in tRNA = N(6)-L-threonylcarbamoyladenosine(37) in tRNA + AMP + H(+). Required for the formation of a threonylcarbamoyl group on adenosine at position 37 (t(6)A37) in tRNAs that read codons beginning with adenine. Is a component of the KEOPS complex that is probably involved in the transfer of the threonylcarbamoyl moiety of threonylcarbamoyl-AMP (TC-AMP) to the N6 group of A37. Kae1 likely plays a direct catalytic role in this reaction, but requires other protein(s) of the complex to fulfill this activity. The sequence is that of tRNA N6-adenosine threonylcarbamoyltransferase from Methanococcoides burtonii (strain DSM 6242 / NBRC 107633 / OCM 468 / ACE-M).